The following is a 423-amino-acid chain: Serpin B12 (423 aa).

Basic and acidic residues predominate over residues 63-72; sequence LSKDEHKEPN. Positions 63 to 106 are disordered; the sequence is LSKDEHKEPNDPSPQSESKASDSSLEGQKQTSASQDQQGESTND. The segment covering 75-106 has biased composition (polar residues); it reads SPQSESKASDSSLEGQKQTSASQDQQGESTND.

This sequence belongs to the serpin family. Ov-serpin subfamily. Interacts with SLFN12; as part of a pathway regulating cell differentiation.

The protein localises to the cytoplasm. Its function is as follows. Inhibits trypsin and plasmin, but not thrombin, coagulation factor Xa, or urokinase-type plasminogen activator. May play a role in cell differentiation. This is Serpin B12 (Serpinb12) from Mus musculus (Mouse).